The chain runs to 421 residues: ATP-dependent RNA helicase RhlB (421 aa).

The Q motif signature appears at 9–37 (QKFSDFALHPKVVEALEKKGFHNCTPIQA). The 180-residue stretch at 40 to 219 (LPLTLAGRDV…FEQMNNAEYI (180 aa)) folds into the Helicase ATP-binding domain. 53-60 (AQTGTGKT) is an ATP binding site. Positions 165 to 168 (DEAD) match the DEAD box motif. The Helicase C-terminal domain occupies 245-390 (RLLQTLIEEE…VSKYNPDALM (146 aa)). Positions 392–421 (DLPKPLRLTRPRTGNGPRRTGTPRNRRRSG) are disordered. Positions 402-414 (PRTGNGPRRTGTP) are enriched in low complexity.

This sequence belongs to the DEAD box helicase family. RhlB subfamily. In terms of assembly, component of the RNA degradosome, which is a multiprotein complex involved in RNA processing and mRNA degradation.

The protein localises to the cytoplasm. The catalysed reaction is ATP + H2O = ADP + phosphate + H(+). In terms of biological role, DEAD-box RNA helicase involved in RNA degradation. Has RNA-dependent ATPase activity and unwinds double-stranded RNA. This chain is ATP-dependent RNA helicase RhlB, found in Escherichia coli O17:K52:H18 (strain UMN026 / ExPEC).